The following is a 234-amino-acid chain: Sugar fermentation stimulation protein homolog (234 aa).

This sequence belongs to the SfsA family.

The sequence is that of Sugar fermentation stimulation protein homolog from Shewanella frigidimarina (strain NCIMB 400).